Here is a 61-residue protein sequence, read N- to C-terminus: Small ribosomal subunit protein uS14 (61 aa).

Positions 24, 27, 40, and 43 each coordinate Zn(2+).

This sequence belongs to the universal ribosomal protein uS14 family. Zinc-binding uS14 subfamily. Part of the 30S ribosomal subunit. Contacts proteins S3 and S10. Zn(2+) is required as a cofactor.

Functionally, binds 16S rRNA, required for the assembly of 30S particles and may also be responsible for determining the conformation of the 16S rRNA at the A site. This is Small ribosomal subunit protein uS14 from Frankia casuarinae (strain DSM 45818 / CECT 9043 / HFP020203 / CcI3).